A 564-amino-acid chain; its full sequence is Eukaryotic translation initiation factor 3 subunit L (564 aa).

Residue serine 2 is modified to N-acetylserine. Phosphoserine is present on serine 21. Positions 331 to 537 (DAIRVFANIL…IHIADTKVAR (207 aa)) constitute a PCI domain. N6-acetyllysine is present on residues lysine 465 and lysine 549.

It belongs to the eIF-3 subunit L family. As to quaternary structure, component of the eukaryotic translation initiation factor 3 (eIF-3) complex, which is composed of 13 subunits: EIF3A, EIF3B, EIF3C, EIF3D, EIF3E, EIF3F, EIF3G, EIF3H, EIF3I, EIF3J, EIF3K, EIF3L and EIF3M. The eIF-3 complex appears to include 3 stable modules: module A is composed of EIF3A, EIF3B, EIF3G and EIF3I; module B is composed of EIF3F, EIF3H, and EIF3M; and module C is composed of EIF3C, EIF3D, EIF3E, EIF3K and EIF3L. EIF3C of module C binds EIF3B of module A and EIF3H of module B, thereby linking the three modules. EIF3J is a labile subunit that binds to the eIF-3 complex via EIF3B. The eIF-3 complex interacts with RPS6KB1 under conditions of nutrient depletion. Mitogenic stimulation leads to binding and activation of a complex composed of MTOR and RPTOR, leading to phosphorylation and release of RPS6KB1 and binding of EIF4B to eIF-3. Interacts with RRN3.

It localises to the cytoplasm. In terms of biological role, component of the eukaryotic translation initiation factor 3 (eIF-3) complex, which is required for several steps in the initiation of protein synthesis. The eIF-3 complex associates with the 40S ribosome and facilitates the recruitment of eIF-1, eIF-1A, eIF-2:GTP:methionyl-tRNAi and eIF-5 to form the 43S pre-initiation complex (43S PIC). The eIF-3 complex stimulates mRNA recruitment to the 43S PIC and scanning of the mRNA for AUG recognition. The eIF-3 complex is also required for disassembly and recycling of post-termination ribosomal complexes and subsequently prevents premature joining of the 40S and 60S ribosomal subunits prior to initiation. The eIF-3 complex specifically targets and initiates translation of a subset of mRNAs involved in cell proliferation, including cell cycling, differentiation and apoptosis, and uses different modes of RNA stem-loop binding to exert either translational activation or repression. This Pan troglodytes (Chimpanzee) protein is Eukaryotic translation initiation factor 3 subunit L.